A 294-amino-acid chain; its full sequence is MKTKIIVIVGPTAVGKTALSIEVAKRFNGQIISGDSQQVYRGLDIGTAKIRPEEQEGIPHHLLDVREVGESYSAYDFVTEAAQAIREIAAQDQLPIICGGTGLYIQSLLEGYHLGGSVPHEEILAYRAQLDSWSDEDLFRKIAELGIEIPQLNRRRAMRALEIAHLGGSLENSQPDYEALLICLDDERERLYERINHRVDLMLEAGLLEEARWLYEQAPISQASKGIGYKELFPYFEGRMSLEEAVDTLKQNTRRFAKRQLTWFRNRMSVTFYQVGNPDYKNQVMEDIKNFLDK.

Residue 10–17 (GPTAVGKT) coordinates ATP. 12 to 17 (TAVGKT) is a substrate binding site. The segment at 35–38 (DSQQ) is interaction with substrate tRNA.

It belongs to the IPP transferase family. As to quaternary structure, monomer. Mg(2+) serves as cofactor.

The catalysed reaction is adenosine(37) in tRNA + dimethylallyl diphosphate = N(6)-dimethylallyladenosine(37) in tRNA + diphosphate. In terms of biological role, catalyzes the transfer of a dimethylallyl group onto the adenine at position 37 in tRNAs that read codons beginning with uridine, leading to the formation of N6-(dimethylallyl)adenosine (i(6)A). In Streptococcus sanguinis (strain SK36), this protein is tRNA dimethylallyltransferase.